Reading from the N-terminus, the 626-residue chain is (R)-linalool synthase 2, chloroplastic (626 aa).

The N-terminal 21 residues, 1 to 21, are a transit peptide targeting the chloroplast; the sequence is MAFVSIAPLASRCCVHKSFVS. The Mg(2+) site is built by aspartate 377, aspartate 381, and glutamate 529. The short motif at 377-381 is the DDXXD motif element; that stretch reads DDIYD.

The protein belongs to the terpene synthase family. Tpsd subfamily. The cofactor is Mg(2+). It depends on Mn(2+) as a cofactor.

The protein resides in the plastid. Its subcellular location is the chloroplast. The enzyme catalyses (2E)-geranyl diphosphate + H2O = (R)-linalool + diphosphate. The protein operates within terpene metabolism; oleoresin biosynthesis. Its function is as follows. Terpene synthase (mono-TPS) involved in the biosynthesis of monoterpene natural products included in conifer oleoresin secretions and volatile emissions; these compounds contribute to biotic and abiotic stress defense against herbivores and pathogens. Catalyzes the conversion of (2E)-geranyl diphosphate (GPP) to (R)-linalool. This chain is (R)-linalool synthase 2, chloroplastic, found in Picea sitchensis (Sitka spruce).